The sequence spans 274 residues: MARRPDNQNPEGENLRIKRVRLESVRQNDEEEENEVSRTQNIVTDNRHDSPEAVVEIIGERALENTSEEDGDDDLSLFRALEEDPGSDHNTSNNDSGNHDRETMHTEEPEASSGNNITLTNNVEELHTMDVLSQTANTPSASPMLDAAPPTTKPGTNSKEQTVDLTADAIDLDAEEQQVLQISDDDFQEETKEAPKEYGAAKDYRCPICFEPPETALMTLCGHVFCCPCLFQMVNSSRTCRQFGHCALCRSKVYLKDVRLIILRKKQVKKKVKS.

Disordered stretches follow at residues 1-117 and 136-159; these read MARR…GNNI and ANTP…TNSK. Over residues 13-28 the composition is skewed to basic and acidic residues; that stretch reads ENLRIKRVRLESVRQN. At Ser50 the chain carries Phosphoserine. At Thr66 the chain carries Phosphothreonine. Residues 66 to 75 are compositionally biased toward acidic residues; sequence TSEEDGDDDL. Residue Ser67 is modified to Phosphoserine. Over residues 97-108 the composition is skewed to basic and acidic residues; sequence GNHDRETMHTEE. The segment at 206 to 250 adopts an RING-type zinc-finger fold; the sequence is CPICFEPPETALMTLCGHVFCCPCLFQMVNSSRTCRQFGHCALCR.

In terms of assembly, component of the heterodimeric SUMO-targeted ubiquitin ligase (STUbL) complex composed of SLX5 and SLX8.

It is found in the nucleus. It localises to the chromosome. The protein resides in the centromere. Its subcellular location is the kinetochore. It catalyses the reaction S-ubiquitinyl-[E2 ubiquitin-conjugating enzyme]-L-cysteine + [acceptor protein]-L-lysine = [E2 ubiquitin-conjugating enzyme]-L-cysteine + N(6)-ubiquitinyl-[acceptor protein]-L-lysine.. It participates in protein modification; protein ubiquitination. Its function is as follows. Component of the SUMO-targeted ubiquitin ligase (STUbL) complex SLX5/SLX8 that mediates ubiquitination and subsequent desumoylation of sumoylated proteins and proteins containing SUMO-like domains for their degradation. The STUbL complex SLX5/SLX8 stimulates ubiquitin conjugating enzymes, including UBC1, UBC4, UBC5 and UBC13-MMS2, and mediates the proteolytic down-regulation of sumoylated proteins. The STUbL complex SLX5/SLX8 is involved in ubiquitin-mediated degradation of histone variant CSE4, preventing mislocalization to euchromatin. The complex plays an essential role in maintenance of chromosome stability and links SUMO-dependent ubiquitination to a centromere-specific function during mitosis. The complex is involved in proteolysis of spindle positioning protein KAR9 and ensures correct spindle function by regulating levels of microtubule-associated proteins. During replication, the complex helps to prevent DNA lesions via recombination and has a role in localizing the DNA damage protein DCD2. The complex especially ubiquitinates the nuclease YEN1 and prevents persistent accumulation of a fraction of YEN1 associated with sites of activity in late G2/M and helps maintain the balance between pro- and anti-crossover pathways during homologous recombination. It is also involved in ubiquitin-mediated degradation of DNA repair proteins RAD52 and RAD57. Finally, the complex is recruited to distinct genomic hotspots of non-H2B protein ubiquitination (ub-hotspots) by the sumoylated transcription factor-like protein EUC1 where it ubiquitinates EUC1 and presumably other targets. This Saccharomyces cerevisiae (strain ATCC 204508 / S288c) (Baker's yeast) protein is E3 ubiquitin-protein ligase complex SLX5-SLX8 subunit SLX8 (SLX8).